Consider the following 305-residue polypeptide: Tyrosine recombinase XerC (305 aa).

A Core-binding (CB) domain is found at 1 to 84; the sequence is MNEVFESYLT…TLRGFYKYAL (84 aa). Residues 105–299 enclose the Tyr recombinase domain; that stretch reads KLPVFMFPKQ…TAEQLQNLYK (195 aa). Residues arginine 146, lysine 170, histidine 251, arginine 254, and histidine 277 contribute to the active site. The active-site O-(3'-phospho-DNA)-tyrosine intermediate is tyrosine 286.

This sequence belongs to the 'phage' integrase family. XerC subfamily. As to quaternary structure, forms a cyclic heterotetrameric complex composed of two molecules of XerC and two molecules of XerD.

Its subcellular location is the cytoplasm. Site-specific tyrosine recombinase, which acts by catalyzing the cutting and rejoining of the recombining DNA molecules. The XerC-XerD complex is essential to convert dimers of the bacterial chromosome into monomers to permit their segregation at cell division. It also contributes to the segregational stability of plasmids. In Treponema denticola (strain ATCC 35405 / DSM 14222 / CIP 103919 / JCM 8153 / KCTC 15104), this protein is Tyrosine recombinase XerC.